Reading from the N-terminus, the 332-residue chain is MSEAGEEQPMETTGATENGHEAVPEASRGRGWTGAAAGAGGATAAPPSGNQNGAEGDQINASKNEEDAGKMFVGGLSWDTSKKDLKDYFTKFGEVVDCTIKMDPNTGRSRGFGFILFKDAASVEKVLDQKEHRLDGRVIDPKKAMAMKKDPVKKIFVGGLNPESPTEEKIREYFGEFGEIEAIELPMDPKLNKRRGFVFITFKEEEPVKKVLEKKFHTVSGSKCEIKVAQPKEVYQQQQYGSGGRGNRNRGNRGSGGGGGGGGQSQSWNQGYGNYWNQGYGYQQGYGPGYGGYDYSPYGYYGYGPGYDYSQGSTNYGKSQRRGGHQNNYKPY.

A disordered region spans residues 1 to 66; sequence MSEAGEEQPM…DQINASKNEE (66 aa). The span at 29-49 shows a compositional bias: low complexity; sequence GRGWTGAAAGAGGATAAPPSG. RRM domains are found at residues 69-154 and 153-233; these read GKMF…PVKK and KKIF…QPKE. Serine 81 bears the Phosphoserine mark. Residues lysine 130 and lysine 203 each participate in a glycyl lysine isopeptide (Lys-Gly) (interchain with G-Cter in SUMO2) cross-link. N6-acetyllysine is present on lysine 215. A disordered region spans residues 235-268; the sequence is YQQQQYGSGGRGNRNRGNRGSGGGGGGGGQSQSW. Serine 242 carries the post-translational modification Phosphoserine. Position 245 is a dimethylated arginine; alternate (arginine 245). Arginine 245 carries the omega-N-methylarginine; alternate modification. An omega-N-methylarginine mark is found at arginine 250, glycine 251, arginine 253, and glycine 254. Residues 253–264 are compositionally biased toward gly residues; the sequence is RGSGGGGGGGGQ. Serine 255 and glycine 256 each carry phosphoserine. An N6-acetyllysine mark is found at glycine 271, tyrosine 272, and lysine 318. The tract at residues 311 to 332 is disordered; the sequence is QGSTNYGKSQRRGGHQNNYKPY. Arginine 322 bears the Dimethylated arginine; alternate mark. Position 322 is an omega-N-methylarginine; alternate (arginine 322). Arginine 322 carries the post-translational modification Asymmetric dimethylarginine; alternate.

Identified in a IGF2BP1-dependent mRNP granule complex containing untranslated mRNAs. Interacts with APOBEC1. In terms of processing, dimethylation at Arg-322 is probably asymmetric. As to expression, ubiquitous.

It is found in the nucleus. Its subcellular location is the cytoplasm. Binds single-stranded RNA. Has a high affinity for G-rich and U-rich regions of hnRNA. Also binds to APOB mRNA transcripts around the RNA editing site. The sequence is that of Heterogeneous nuclear ribonucleoprotein A/B (HNRNPAB) from Homo sapiens (Human).